A 144-amino-acid polypeptide reads, in one-letter code: Maximins 7/H13 (144 aa).

Residues 1-18 form the signal peptide; the sequence is MNFKYIVAVSFLIASAYA. The propeptide occupies 19-43; that stretch reads RSEENDEQSLSQRDVLEEESLREIR. Asparagine amide is present on Asn-70. Positions 74–123 are excised as a propeptide; sequence TAEDHEVMKRLEAVMRDLDSLDYPEEAAERETRGFNQEEIANLFTKKEKR. The residue at position 143 (Leu-143) is a Leucine amide.

This sequence belongs to the bombinin family. Expressed by the skin glands.

It is found in the secreted. Functionally, maximin-7 shows antimicrobial activity against bacteria and against the fungus C.albicans. It has little hemolytic activity. In terms of biological role, maximin-H13 shows antimicrobial activity against bacteria and against the fungus C.albicans. Shows strong hemolytic activity. The protein is Maximins 7/H13 of Bombina maxima (Giant fire-bellied toad).